Reading from the N-terminus, the 393-residue chain is Probable protein phosphatase 2C 72 (393 aa).

The 309-residue stretch at 49 to 357 (EFSMAVVQAN…DDITVVVVFF (309 aa)) folds into the PPM-type phosphatase domain. Mn(2+) contacts are provided by Asp88 and Gly89. Residues 147-167 (LAAVGSCCLVGVICAGNLYIA) form a helical membrane-spanning segment. Residues Asp289 and Asp348 each contribute to the Mn(2+) site.

It belongs to the PP2C family. The cofactor is Mg(2+). It depends on Mn(2+) as a cofactor.

The protein resides in the membrane. It carries out the reaction O-phospho-L-seryl-[protein] + H2O = L-seryl-[protein] + phosphate. It catalyses the reaction O-phospho-L-threonyl-[protein] + H2O = L-threonyl-[protein] + phosphate. The sequence is that of Probable protein phosphatase 2C 72 from Oryza sativa subsp. japonica (Rice).